Here is a 184-residue protein sequence, read N- to C-terminus: Large ribosomal subunit protein uL5c (184 aa).

It belongs to the universal ribosomal protein uL5 family. Part of the 50S ribosomal subunit; contacts the 5S rRNA.

It is found in the plastid. The protein resides in the chloroplast. Binds 5S rRNA, forms part of the central protuberance of the 50S subunit. This chain is Large ribosomal subunit protein uL5c (rpl5), found in Mesostigma viride (Green alga).